The sequence spans 291 residues: 4-hydroxy-tetrahydrodipicolinate synthase (291 aa).

Thr45 serves as a coordination point for pyruvate. Tyr133 (proton donor/acceptor) is an active-site residue. Catalysis depends on Lys161, which acts as the Schiff-base intermediate with substrate. Ile203 contacts pyruvate.

This sequence belongs to the DapA family. As to quaternary structure, homotetramer; dimer of dimers.

The protein resides in the cytoplasm. It catalyses the reaction L-aspartate 4-semialdehyde + pyruvate = (2S,4S)-4-hydroxy-2,3,4,5-tetrahydrodipicolinate + H2O + H(+). The protein operates within amino-acid biosynthesis; L-lysine biosynthesis via DAP pathway; (S)-tetrahydrodipicolinate from L-aspartate: step 3/4. Catalyzes the condensation of (S)-aspartate-beta-semialdehyde [(S)-ASA] and pyruvate to 4-hydroxy-tetrahydrodipicolinate (HTPA). The protein is 4-hydroxy-tetrahydrodipicolinate synthase of Laribacter hongkongensis (strain HLHK9).